We begin with the raw amino-acid sequence, 276 residues long: Large ribosomal subunit protein uL2 (276 aa).

The segment at Ala-224–Gly-276 is disordered. Positions Lys-254 to Lys-270 are enriched in basic residues.

This sequence belongs to the universal ribosomal protein uL2 family. Part of the 50S ribosomal subunit. Forms a bridge to the 30S subunit in the 70S ribosome.

One of the primary rRNA binding proteins. Required for association of the 30S and 50S subunits to form the 70S ribosome, for tRNA binding and peptide bond formation. It has been suggested to have peptidyltransferase activity; this is somewhat controversial. Makes several contacts with the 16S rRNA in the 70S ribosome. The protein is Large ribosomal subunit protein uL2 of Ehrlichia ruminantium (strain Gardel).